The following is a 2057-amino-acid chain: Fer-1-like protein 5 (2057 aa).

C2 domains lie at 1–99, 152–265, 308–425, 1057–1188, 1213–1346, 1467–1587, and 1705–1853; these read MLRL…VLFV, PGST…TLLR, DDTD…EGVY, DTRP…MRWH, KLGE…AQDY, PKPP…AHCG, and GPPG…KQCS. Residues aspartate 1502, aspartate 1508, aspartate 1557, phenylalanine 1558, aspartate 1559, serine 1562, aspartate 1565, aspartate 1824, serine 1827, and aspartate 1830 each coordinate Ca(2+). A helical membrane pass occupies residues 1962-1982; the sequence is LIAFMVISIIALMLFNFIYSA.

It belongs to the ferlin family. Interacts (via second C2 domain) with EHD1 and EHD2. It depends on Ca(2+) as a cofactor.

The protein resides in the cell membrane. It is found in the membrane. Its function is as follows. Plays a role in myoblast fusion; probable mediator of endocytic recycling for membrane trafficking events during myotube formation. This Homo sapiens (Human) protein is Fer-1-like protein 5 (FER1L5).